The chain runs to 266 residues: Type II iodothyronine deiodinase (266 aa).

Residues 1 to 13 are Lumenal-facing; sequence MGSASEDLLVTLQ. A helical; Signal-anchor for type III membrane protein membrane pass occupies residues 14–34; that stretch reads ILPGFFSNCLFLALYDSVVLV. Residues 35–266 lie on the Cytoplasmic side of the membrane; sequence KRVVALLSRS…QWLELSYGRR (232 aa). Residue U134 is part of the active site. Position 134 (U134) is a non-standard amino acid, selenocysteine.

This sequence belongs to the iodothyronine deiodinase family. Predominantly monomer. Can form homodimers but homodimerization is not essential for enzyme activity.

The protein resides in the endoplasmic reticulum membrane. The catalysed reaction is 3,3',5-triiodo-L-thyronine + iodide + A + H(+) = L-thyroxine + AH2. It carries out the reaction 3,3'-diiodo-L-thyronine + iodide + A + H(+) = 3,3',5'-triiodo-L-thyronine + AH2. The enzyme catalyses 3'-iodo-L-thyronine + iodide + A + H(+) = 3',5'-diiodo-L-thyronine + AH2. Not inhibited by N(6)-propylthiouracil. Its function is as follows. Plays a crucial role in the metabolism of thyroid hormones (TH) and has specific roles in TH activation and inactivation by deiodination. Catalyzes the conversion of T4 (L-thyroxine/3,5,3',5'-tetraiodothyronine) to T3 (3,5,3'-triiodothyronine) and rT3 (3,3',5'-triiodothyronine) to T2 (3,3'-diiodothyronine) via outer-ring deiodination (ORD). Catalyzes the conversion 3',5'-T2 (3,5-diiodothyronine) to 3-T1 (3-monoiodothyronine) via ORD. This chain is Type II iodothyronine deiodinase (dio2), found in Fundulus heteroclitus (Killifish).